The sequence spans 146 residues: uncharacterized protein (146 aa).

A run of 5 helical transmembrane segments spans residues 5–27 (GAMV…YGLA), 32–49 (FVYV…YIIL), 61–80 (LAVM…FFSG), 90–108 (SLGL…ARVF), and 120–142 (FFLK…MLFL).

The protein resides in the cell membrane. This is an uncharacterized protein from Archaeoglobus fulgidus (strain ATCC 49558 / DSM 4304 / JCM 9628 / NBRC 100126 / VC-16).